The primary structure comprises 189 residues: Large ribosomal subunit protein bL9 (189 aa).

Belongs to the bacterial ribosomal protein bL9 family.

Binds to the 23S rRNA. The polypeptide is Large ribosomal subunit protein bL9 (Methylobacterium nodulans (strain LMG 21967 / CNCM I-2342 / ORS 2060)).